The primary structure comprises 256 residues: Pimeloyl-[acyl-carrier protein] methyl ester esterase (256 aa).

The AB hydrolase-1 domain maps to histidine 15–proline 242. Residues tryptophan 22, serine 82 to leucine 83, and phenylalanine 143 to glutamine 147 each bind substrate. Serine 82 serves as the catalytic Nucleophile. Residues aspartate 207 and histidine 235 contribute to the active site. Histidine 235 provides a ligand contact to substrate.

The protein belongs to the AB hydrolase superfamily. Carboxylesterase BioH family. As to quaternary structure, monomer.

The protein resides in the cytoplasm. The catalysed reaction is 6-carboxyhexanoyl-[ACP] methyl ester + H2O = 6-carboxyhexanoyl-[ACP] + methanol + H(+). It functions in the pathway cofactor biosynthesis; biotin biosynthesis. Its function is as follows. The physiological role of BioH is to remove the methyl group introduced by BioC when the pimeloyl moiety is complete. It allows to synthesize pimeloyl-ACP via the fatty acid synthetic pathway through the hydrolysis of the ester bonds of pimeloyl-ACP esters. In Escherichia coli O81 (strain ED1a), this protein is Pimeloyl-[acyl-carrier protein] methyl ester esterase.